The primary structure comprises 315 residues: Methionyl-tRNA formyltransferase (315 aa).

The N-terminal domain stretch occupies residues 2–189 (SESLRIIFAG…LITTLKQLAD (188 aa)). Position 113–116 (113–116 (SLLP)) interacts with (6S)-5,6,7,8-tetrahydrofolate. The tract at residues 210-315 (KEEARIDWSL…EWFVPGNRLV (106 aa)) is C-terminal domain.

Belongs to the Fmt family.

It carries out the reaction L-methionyl-tRNA(fMet) + (6R)-10-formyltetrahydrofolate = N-formyl-L-methionyl-tRNA(fMet) + (6S)-5,6,7,8-tetrahydrofolate + H(+). Functionally, attaches a formyl group to the free amino group of methionyl-tRNA(fMet). The formyl group appears to play a dual role in the initiator identity of N-formylmethionyl-tRNA by promoting its recognition by IF2 and preventing the misappropriation of this tRNA by the elongation apparatus. The chain is Methionyl-tRNA formyltransferase from Escherichia coli O157:H7.